The primary structure comprises 411 residues: Trigger factor (411 aa).

The PPIase FKBP-type domain occupies 162–240 (EDLVVIDYTT…IKEVKRRQNI (79 aa)).

Belongs to the FKBP-type PPIase family. Tig subfamily.

It is found in the cytoplasm. The enzyme catalyses [protein]-peptidylproline (omega=180) = [protein]-peptidylproline (omega=0). In terms of biological role, involved in protein export. Acts as a chaperone by maintaining the newly synthesized protein in an open conformation. Functions as a peptidyl-prolyl cis-trans isomerase. The polypeptide is Trigger factor (Thermodesulfovibrio yellowstonii (strain ATCC 51303 / DSM 11347 / YP87)).